The primary structure comprises 213 residues: Uridine kinase (213 aa).

13 to 20 contacts ATP; it reads GASASGKS.

Belongs to the uridine kinase family.

Its subcellular location is the cytoplasm. The enzyme catalyses uridine + ATP = UMP + ADP + H(+). It catalyses the reaction cytidine + ATP = CMP + ADP + H(+). Its pathway is pyrimidine metabolism; CTP biosynthesis via salvage pathway; CTP from cytidine: step 1/3. The protein operates within pyrimidine metabolism; UMP biosynthesis via salvage pathway; UMP from uridine: step 1/1. The chain is Uridine kinase from Haemophilus influenzae (strain PittEE).